A 355-amino-acid polypeptide reads, in one-letter code: Heme A synthase (355 aa).

8 helical membrane-spanning segments follow: residues 21–41 (LARW…VGGI), 85–102 (INLG…FWEW), 136–156 (LFAL…MVAS), 173–193 (LLTA…LGAL), 208–228 (AIGV…VAGL), 264–284 (FLIH…LLLL), 299–319 (ALVI…VSGV), and 322–342 (WVAV…AAAL). His-270 is a binding site for heme. His-327 is a heme binding site.

The protein belongs to the COX15/CtaA family. Type 2 subfamily. Interacts with CtaB. The cofactor is heme b.

It is found in the cell membrane. It carries out the reaction Fe(II)-heme o + 2 A + H2O = Fe(II)-heme a + 2 AH2. It functions in the pathway porphyrin-containing compound metabolism; heme A biosynthesis; heme A from heme O: step 1/1. Its function is as follows. Catalyzes the conversion of heme O to heme A by two successive hydroxylations of the methyl group at C8. The first hydroxylation forms heme I, the second hydroxylation results in an unstable dihydroxymethyl group, which spontaneously dehydrates, resulting in the formyl group of heme A. The protein is Heme A synthase of Sphingopyxis alaskensis (strain DSM 13593 / LMG 18877 / RB2256) (Sphingomonas alaskensis).